We begin with the raw amino-acid sequence, 317 residues long: MAAPMELFCWSGGWGLPSVDLDSLAVLTYARFTGAPLKVHKITNPWRSPSGTLPALRTSHGEVISVPHRIITHLRKEKYNADYDLSARQGADTLAFMSLLEEKLLPVLKHTFWIDAKNYVEVTRKWYAEAMPFPLNFFLPGRMQRQYMERLQLLCGEHRPEDEEELEKELYQEAQECLTLLSQRLGSQKFFFGDAPASLDAFVFSYLALLQQAKLPSGKLQAHLRGLHNLCAYCAHILSLYFPWEGAKAPPPRQTPANPETEEEPYRRRNQILTVLAGLAAMAGYALLSGIVSIQRAPSARAPGTQALGMAEEDEEE.

Glycyl lysine isopeptide (Lys-Gly) (interchain with G-Cter in ubiquitin) cross-links involve residues Lys-38, Lys-41, and Lys-78. A helical transmembrane segment spans residues 164 to 184; sequence EELEKELYQEAQECLTLLSQR.

Belongs to the metaxin family. As to quaternary structure, interacts with MTX2/metaxin-2. Associates with the mitochondrial contact site and cristae organizing system (MICOS) complex, composed of at least MICOS10/MIC10, CHCHD3/MIC19, CHCHD6/MIC25, APOOL/MIC27, IMMT/MIC60, APOO/MIC23/MIC26 and QIL1/MIC13. This complex was also known under the names MINOS or MitOS complex. The MICOS complex associates with mitochondrial outer membrane proteins SAMM50, MTX1 and MTX2 (together described as components of the mitochondrial outer membrane sorting assembly machinery (SAM) complex) and DNAJC11, mitochondrial inner membrane protein TMEM11 and with HSPA9. The MICOS and SAM complexes together with DNAJC11 are part of a large protein complex spanning both membranes termed the mitochondrial intermembrane space bridging (MIB) complex. Interacts with ARMC1. Post-translationally, ubiquitinated by PRKN during mitophagy, leading to its degradation and enhancement of mitophagy. Deubiquitinated by USP30.

The protein resides in the mitochondrion outer membrane. Functionally, involved in transport of proteins into the mitochondrion. Essential for embryonic development. This chain is Metaxin-1 (MTX1), found in Bos taurus (Bovine).